Reading from the N-terminus, the 284-residue chain is Pantothenate synthetase (284 aa).

30–37 (MGNLHDGH) lines the ATP pocket. The active-site Proton donor is the H37. A (R)-pantoate-binding site is contributed by Q61. Q61 lines the beta-alanine pocket. 149–152 (GEKD) lines the ATP pocket. Residue Q155 participates in (R)-pantoate binding. Residues I178 and 186-189 (LSSR) each bind ATP.

Belongs to the pantothenate synthetase family. In terms of assembly, homodimer.

Its subcellular location is the cytoplasm. The catalysed reaction is (R)-pantoate + beta-alanine + ATP = (R)-pantothenate + AMP + diphosphate + H(+). It functions in the pathway cofactor biosynthesis; (R)-pantothenate biosynthesis; (R)-pantothenate from (R)-pantoate and beta-alanine: step 1/1. Functionally, catalyzes the condensation of pantoate with beta-alanine in an ATP-dependent reaction via a pantoyl-adenylate intermediate. This Salmonella paratyphi B (strain ATCC BAA-1250 / SPB7) protein is Pantothenate synthetase.